A 498-amino-acid chain; its full sequence is Pyridine nucleotide-disulfide oxidoreductase domain-containing protein 1 (498 aa).

Methionine 1 is subject to N-acetylmethionine.

It belongs to the class-I pyridine nucleotide-disulfide oxidoreductase family. PYROXD1 subfamily. FAD is required as a cofactor.

Its subcellular location is the nucleus. The protein localises to the cytoplasm. It is found in the myofibril. The protein resides in the sarcomere. Probable FAD-dependent oxidoreductase; involved in the cellular oxidative stress response. Required for normal sarcomere structure and muscle fiber integrity. This Rattus norvegicus (Rat) protein is Pyridine nucleotide-disulfide oxidoreductase domain-containing protein 1 (Pyroxd1).